Here is a 96-residue protein sequence, read N- to C-terminus: Defensin-like protein 69 (96 aa).

A signal peptide spans 1 to 19 (MGSSKLLVAFTLIVMMTIS). Disulfide bonds link Cys-37-Cys-86, Cys-41-Cys-64, Cys-50-Cys-84, and Cys-54-Cys-85.

This sequence belongs to the DEFL family.

The protein localises to the secreted. The protein is Defensin-like protein 69 of Arabidopsis thaliana (Mouse-ear cress).